We begin with the raw amino-acid sequence, 477 residues long: MYFSSYQNLRKRLLSREISCETVVLDYLERIRKNHERNVYITVFNDQALQRAKELDRKLEAGEQPGRLFGLPMAVKDNLSVKDASLTCASKILEGYTAVYNATAVERLLKEDAVFLGKVNMDEFAMGSSNENSAFGPVPNPYDDSRVPGGSSGGSAAAVAGDLAMVALGSDTGGSVRQPAGFCNVVGLKPTYGRISRYGLVAFGSSFDQIGILSRNCDDAALVLGVIAGKDAADTTSSQHVVPDYLSEMGSVSLKGMKIGVPEEYFPETLDPGVALAVRNRLEELRDAGAELVDIALPESDHAIAAYYILTTAEASSNLARFDGARYGYRSGDASDLSGMYVNSRSEGFGGEVKRRIMLGTYVLSAGYYDTYYKKAQQVRRVFLDRYKEALAKVDVIAGPTSPFPPFGIGDKMDEPLEMYLADVFTVPASIAGLPALSVPAGFDRSGLPVGLQLIGDFFDEGKLLGIAREIQRSQEE.

Active-site charge relay system residues include Lys-76 and Ser-151. The active-site Acyl-ester intermediate is the Ser-175.

It belongs to the amidase family. GatA subfamily. Heterotrimer of A, B and C subunits.

The catalysed reaction is L-glutamyl-tRNA(Gln) + L-glutamine + ATP + H2O = L-glutaminyl-tRNA(Gln) + L-glutamate + ADP + phosphate + H(+). Allows the formation of correctly charged Gln-tRNA(Gln) through the transamidation of misacylated Glu-tRNA(Gln) in organisms which lack glutaminyl-tRNA synthetase. The reaction takes place in the presence of glutamine and ATP through an activated gamma-phospho-Glu-tRNA(Gln). This chain is Glutamyl-tRNA(Gln) amidotransferase subunit A, found in Chlorobium phaeobacteroides (strain BS1).